The chain runs to 194 residues: Ras-related protein Rab-22A (194 aa).

GTP is bound at residue 12-20 (GDTGVGKSS). The Effector region motif lies at 34–42 (INPTIGASF). GTP-binding positions include 60 to 64 (DTAGQ), 118 to 121 (NKCD), and 148 to 150 (SAK). Positions 170 to 194 (DANPPSGGKGFKLRRQPSEPQRSCC) are disordered. S-geranylgeranyl cysteine attachment occurs at residues cysteine 193 and cysteine 194.

Belongs to the small GTPase superfamily. Rab family. In terms of assembly, interacts directly with ZFYVE20. Interacts (in its GTP-bound form) with RINL and RABGEF1. Binds EEA1.

The protein localises to the endosome membrane. It is found in the cell membrane. The protein resides in the early endosome. It localises to the late endosome. Its subcellular location is the cell projection. The protein localises to the ruffle. It is found in the cytoplasmic vesicle. The protein resides in the phagosome. It localises to the phagosome membrane. In terms of biological role, plays a role in endocytosis and intracellular protein transport. Mediates trafficking of TF from early endosomes to recycling endosomes. Required for NGF-mediated endocytosis of NTRK1, and subsequent neurite outgrowth. Binds GTP and GDP and has low GTPase activity. Alternates between a GTP-bound active form and a GDP-bound inactive form. The protein is Ras-related protein Rab-22A (RAB22A) of Canis lupus familiaris (Dog).